We begin with the raw amino-acid sequence, 102 residues long: Small ribosomal subunit protein uS10 (102 aa).

It belongs to the universal ribosomal protein uS10 family. In terms of assembly, part of the 30S ribosomal subunit.

Functionally, involved in the binding of tRNA to the ribosomes. The protein is Small ribosomal subunit protein uS10 of Exiguobacterium sibiricum (strain DSM 17290 / CCUG 55495 / CIP 109462 / JCM 13490 / 255-15).